The chain runs to 130 residues: Anti-adapter protein IraD (130 aa).

This sequence belongs to the GpW/Gp25 family. IraD subfamily. As to quaternary structure, interacts with RssB.

It is found in the cytoplasm. Functionally, inhibits RpoS proteolysis by regulating RssB activity, thereby increasing the stability of the sigma stress factor RpoS during oxidative stress. Its effect on RpoS stability is due to its interaction with RssB, which probably blocks the interaction of RssB with RpoS, and the consequent delivery of the RssB-RpoS complex to the ClpXP protein degradation pathway. This Escherichia coli O157:H7 protein is Anti-adapter protein IraD.